The chain runs to 251 residues: 1-(5-phosphoribosyl)-5-[(5-phosphoribosylamino)methylideneamino] imidazole-4-carboxamide isomerase (251 aa).

Aspartate 7 (proton acceptor) is an active-site residue. Aspartate 131 functions as the Proton donor in the catalytic mechanism.

This sequence belongs to the HisA/HisF family.

It is found in the cytoplasm. It catalyses the reaction 1-(5-phospho-beta-D-ribosyl)-5-[(5-phospho-beta-D-ribosylamino)methylideneamino]imidazole-4-carboxamide = 5-[(5-phospho-1-deoxy-D-ribulos-1-ylimino)methylamino]-1-(5-phospho-beta-D-ribosyl)imidazole-4-carboxamide. The protein operates within amino-acid biosynthesis; L-histidine biosynthesis; L-histidine from 5-phospho-alpha-D-ribose 1-diphosphate: step 4/9. The chain is 1-(5-phosphoribosyl)-5-[(5-phosphoribosylamino)methylideneamino] imidazole-4-carboxamide isomerase from Blochmanniella floridana.